The following is a 470-amino-acid chain: Ribulose bisphosphate carboxylase large chain (470 aa).

Residues Asn115 and Thr165 each contribute to the substrate site. Lys167 serves as the catalytic Proton acceptor. Residue Lys169 participates in substrate binding. 3 residues coordinate Mg(2+): Lys193, Asp195, and Glu196. Lys193 carries the N6-carboxylysine modification. The active-site Proton acceptor is His286. Arg287, His319, and Ser371 together coordinate substrate.

This sequence belongs to the RuBisCO large chain family. Type I subfamily. Heterohexadecamer of 8 large chains and 8 small chains. It depends on Mg(2+) as a cofactor.

The protein localises to the carboxysome. The catalysed reaction is 2 (2R)-3-phosphoglycerate + 2 H(+) = D-ribulose 1,5-bisphosphate + CO2 + H2O. It carries out the reaction D-ribulose 1,5-bisphosphate + O2 = 2-phosphoglycolate + (2R)-3-phosphoglycerate + 2 H(+). In terms of biological role, ruBisCO catalyzes two reactions: the carboxylation of D-ribulose 1,5-bisphosphate, the primary event in carbon dioxide fixation, as well as the oxidative fragmentation of the pentose substrate in the photorespiration process. Both reactions occur simultaneously and in competition at the same active site. The polypeptide is Ribulose bisphosphate carboxylase large chain (Prochlorococcus marinus (strain NATL1A)).